The following is a 384-amino-acid chain: Cytochrome b (384 aa).

The next 4 membrane-spanning stretches (helical) occupy residues 32-52, 76-98, 113-133, and 179-199; these read VGSL…FLAM, WLIR…LHIG, LWVI…MGYC, and FFAL…MHLM. Heme b-binding residues include H82 and H96. 2 residues coordinate heme b: H183 and H197. H202 lines the a ubiquinone pocket. The next 4 helical transmembrane spans lie at 225-245, 289-309, 321-341, and 348-368; these read FIFK…LFVF, LGGV…PYTD, LSKF…NLGQ, and YIEL…LIVP.

Belongs to the cytochrome b family. In terms of assembly, fungal cytochrome b-c1 complex contains 10 subunits; 3 respiratory subunits, 2 core proteins and 5 low-molecular weight proteins. Cytochrome b-c1 complex is a homodimer. The cofactor is heme b.

The protein localises to the mitochondrion inner membrane. Component of the ubiquinol-cytochrome c reductase complex (complex III or cytochrome b-c1 complex) that is part of the mitochondrial respiratory chain. The b-c1 complex mediates electron transfer from ubiquinol to cytochrome c. Contributes to the generation of a proton gradient across the mitochondrial membrane that is then used for ATP synthesis. The protein is Cytochrome b (COB) of Candida parapsilosis (Yeast).